The primary structure comprises 1183 residues: DNA-directed RNA polymerase subunit beta (1183 aa).

The segment covering 1153–1162 (DMQDNEEEDV) has biased composition (acidic residues). Residues 1153 to 1183 (DMQDNEEEDVVERKVDLQQKDAPQSQKEVTD) are disordered. The segment covering 1173-1183 (DAPQSQKEVTD) has biased composition (polar residues).

It belongs to the RNA polymerase beta chain family. The RNAP catalytic core consists of 2 alpha, 1 beta, 1 beta' and 1 omega subunit. When a sigma factor is associated with the core the holoenzyme is formed, which can initiate transcription.

The enzyme catalyses RNA(n) + a ribonucleoside 5'-triphosphate = RNA(n+1) + diphosphate. DNA-dependent RNA polymerase catalyzes the transcription of DNA into RNA using the four ribonucleoside triphosphates as substrates. The protein is DNA-directed RNA polymerase subunit beta of Staphylococcus saprophyticus subsp. saprophyticus (strain ATCC 15305 / DSM 20229 / NCIMB 8711 / NCTC 7292 / S-41).